Here is a 780-residue protein sequence, read N- to C-terminus: MATSNLLKNKGSLQFEDKWDFMRPIVLKLLRQESVTKQQWFDLFSDVHAVCLWDDKGPAKIHQALKEDILEFIKQAQARVLSHQDDTALLKAYIVEWRKFFTQCDILPKPFCQLEITLMGKQGSNKKSNVEDSIVRKLMLDTWNESIFSNIKNRLQDSAMKLVHAERLGEAFDSQLVIGVRESYVNLCSNPEDKLQIYRDNFEKAYLDSTERFYRTQAPSYLQQNGVQNYMKYADAKLKEEEKRALRYLETRRECNSVEALMECCVNALVTSFKETILAECQGMIKRNETEKLHLMFSLMDKVPNGIEPMLKDLEEHIISAGLADMVAAAETITTDSEKYVEQLLTLFNRFSKLVKEAFQDDPRFLTARDKAYKAVVNDATIFKLELPLKQKGVGLKTQPESKCPELLAIYCDMLLRKTPLSKKLTSEEIEAKLKEVLLVLKYVQNKDVFMRYHKAHLTRRLILDISADSEIEENMVEWLREVGMPADYVNKLARMFQDIKVSEDLNQAFKEMHKNNKLALPADSVNIKILNAGAWSRSSEKVFVSLPTELEDLIPEVEEFYKKNHSGRKLHWHHLMSNGIITFKNEVGQYDLEVTTFQLAVLFAWNQRPREKISFENLKLATELPDAELRRTLWSLVAFPKLKRQVLLYEPQVNSPKDFTEGTLFSVNQEFSLIKNAKVQKRGKINLIGRLQLTTERMREEENEGIVQLRILRTQEAIIQIMKMRKKISNAQLQTELVEILKNMFLPQKKMIKEQIEWLIEHKYIRRDESDINTFIYMA.

S34 bears the Phosphoserine mark. T210 is modified (phosphothreonine). The Cullin neddylation domain maps to 711-772 (RILRTQEAII…HKYIRRDESD (62 aa)). K724 is covalently cross-linked (Glycyl lysine isopeptide (Lys-Gly) (interchain with G-Cter in NEDD8)).

This sequence belongs to the cullin family. In terms of assembly, component of multiple cullin-5-RING E3 ubiquitin-protein ligase complexes (ECS complexes, also named CRL5 complexes) formed of CUL5, Elongin BC (ELOB and ELOC), RNF7/RBX2 and a variable SOCS box domain-containing protein as substrate-specific recognition component. CUL5-containing ECS complexes specifically contain RNF7/RBX2, and not RBX1, as catalytic subunit. Component of the ECS(ASB2) complex with the substrate recognition component ASB2. Component of the ECS(ASB6) complex with the substrate recognition component ASB6. Component of the ECS(ASB7) complex with the substrate recognition component ASB7. Component of the ECS(ASB9) complex with the substrate recognition component ASB9. Component of the ECS(ASB11) complex with the substrate recognition component ASB11. Component of the ECS(ASB12) complex with the substrate recognition component ASB12. Component of the ECS(LRRC41) complex with the substrate recognition component LRRC41. Component of the ECS(SOCS1) complex with the substrate recognition component SOCS1. Component of the ECS(SOCS2) complex with the substrate recognition component SOCS2. Component of the ECS(WSB1) complex with the substrate recognition subunit WSB1. Component of the ECS(SOCS3) complex with the substrate recognition component SOCS3. Component of the ECS(SOCS7) complex with the substrate recognition component SOCS7. Component of the ECS(SPSB1) complex with the substrate recognition component SPSB1. Component of the ECS(SPSB3) complex with the substrate recognition component SPSB3. Component of the ECS(SPSB2) complex with the substrate recognition component SPSB2. Component of the ECS(SPSB4) complex with the substrate recognition component SPSB4. Component of the ECS(RAB40) complex with the substrate recognition subunit RAB40A, RAB40B or RAB40C. Component of the ECS(KLHDC1) complex with the substrate recognition component KLHDC1. Component of the ECS(PCMTD1) complex with the substrate recognition subunit PCMTD1. May also form complexes containing RBX1 and ELOA or VHL; additional evidence is however required to confirm this result in vivo. Interacts (when neddylated) with ARIH2; leading to activate the E3 ligase activity of ARIH2. Interacts with ERCC6; the interaction is induced by DNA damaging agents or inhibitors of RNA polymerase II elongation. Interacts with ELOA (via the BC-box). Interacts (unneddylated form) with DCUN1D1, DCUN1D2, DCUN1D3, DCUN1D4 and DCUN1D5; these interactions promote the cullin neddylation. Neddylated; which enhances the ubiquitination activity of ECS complexes and prevents binding of the inhibitor CAND1. Deneddylated via its interaction with the COP9 signalosome (CSN).

It is found in the nucleus. Its pathway is protein modification; protein ubiquitination. In terms of biological role, core component of multiple cullin-5-RING E3 ubiquitin-protein ligase complexes (ECS complexes, also named CRL5 complexes), which mediate the ubiquitination and subsequent proteasomal degradation of target proteins. Acts a scaffold protein that contributes to catalysis through positioning of the substrate and the ubiquitin-conjugating enzyme. The functional specificity of the E3 ubiquitin-protein ligase complex depends on the variable SOCS box-containing substrate recognition component. Acts as a key regulator of neuron positioning during cortex development: component of various SOCS-containing ECS complexes, such as the ECS(SOCS7) complex, that regulate reelin signaling by mediating ubiquitination and degradation of DAB1. ECS(SOCS1) seems to direct ubiquitination of JAK2. The ECS(SOCS2) complex mediates the ubiquitination and subsequent proteasomal degradation of phosphorylated EPOR and GHR. The ECS(SPSB3) complex catalyzes ubiquitination of nuclear CGAS. ECS(KLHDC1) complex is part of the DesCEND (destruction via C-end degrons) pathway and mediates ubiquitination and degradation of truncated SELENOS selenoprotein produced by failed UGA/Sec decoding, which ends with a glycine. The ECS(ASB9) complex mediates ubiquitination and degradation of CKB. As part of some ECS complex, promotes 'Lys-11'-linked ubiquitination and degradation of BTRC. As part of a multisubunit ECS complex, polyubiquitinates monoubiquitinated POLR2A. As part of the ECS(RAB40C) complex, mediates ANKRD28 ubiquitination and degradation, thereby regulating protein phosphatase 6 (PP6) complex activity and focal adhesion assembly during cell migration. As part of the ECS(RAB40A) complex, mediates RHOU 'Lys-48'-linked ubiquitination and degradation, thus inhibiting focal adhesion disassembly during cell migration. As part of the ECS(RAB40B) complex, mediates LIMA1/EPLIN and RAP2 ubiquitination, thereby regulating actin cytoskeleton dynamics and stress fiber formation during cell migration. May form a cell surface vasopressin receptor. The polypeptide is Cullin-5 (Pongo abelii (Sumatran orangutan)).